The chain runs to 216 residues: Guanylate kinase (216 aa).

Positions 15–193 constitute a Guanylate kinase-like domain; sequence GNLFMVVAPS…ALKQLQNVVH (179 aa). 22–29 provides a ligand contact to ATP; it reads APSGAGKS.

The protein belongs to the guanylate kinase family.

It localises to the cytoplasm. It catalyses the reaction GMP + ATP = GDP + ADP. Its function is as follows. Essential for recycling GMP and indirectly, cGMP. This Cupriavidus metallidurans (strain ATCC 43123 / DSM 2839 / NBRC 102507 / CH34) (Ralstonia metallidurans) protein is Guanylate kinase.